We begin with the raw amino-acid sequence, 578 residues long: Ketol-acid reductoisomerase, chloroplastic (578 aa).

A chloroplast-targeting transit peptide spans 1–52; sequence MAASTTLALSHPKTLAAAAAAAPKAPTAPAAVSFPVSHAACAPLAARRRAVT. Residues 90–288 enclose the KARI N-terminal Rossmann domain; the sequence is VRGGRNLFPL…ALGSPFTFAT (199 aa). NADP(+) contacts are provided by residues 111-118, 144-149, and 183-187; these read GVIGWGSQ, RKGSKS, and SDAAQ. Residue H208 is part of the active site. KARI C-terminal knotted domains follow at residues 289-437 and 438-574; these read TLEQ…RPEN and DLGP…RPEL. D297, E301, E474, and E478 together coordinate Mg(2+). S500 is a binding site for substrate.

The protein belongs to the ketol-acid reductoisomerase family. Homodimer. Requires Mg(2+) as cofactor.

The protein resides in the plastid. It localises to the chloroplast. The catalysed reaction is (2R)-2,3-dihydroxy-3-methylbutanoate + NADP(+) = (2S)-2-acetolactate + NADPH + H(+). It catalyses the reaction (2R,3R)-2,3-dihydroxy-3-methylpentanoate + NADP(+) = (S)-2-ethyl-2-hydroxy-3-oxobutanoate + NADPH + H(+). The protein operates within amino-acid biosynthesis; L-isoleucine biosynthesis; L-isoleucine from 2-oxobutanoate: step 2/4. It functions in the pathway amino-acid biosynthesis; L-valine biosynthesis; L-valine from pyruvate: step 2/4. This is Ketol-acid reductoisomerase, chloroplastic from Oryza sativa subsp. japonica (Rice).